The chain runs to 276 residues: MRLVILDNYDLASEWAAKYICNRIIQFKPGQDRYFTLGLPTGSTPLGCYKKLIEYHKNGHLSFKYVKTFNMDEYVGLPRNHPESYHSYMWNNFFKHIDIDPNNAHILDGNAADLQAECDAFENKIKEAGGIDLFVGGIGPDGHIAFNEPGSSLVSRTRLKTLAMDTILANAKYFDGDLSKVPTMALTVGVGTVMDAREVMILITGAHKAFALYKAIEEGVNHMWTVSAFQQHPRTIFVCDEDATLELRVKTVKYFKGLMHVHNKLVDPLFSMKDGN.

D72 serves as the catalytic Proton acceptor; for enolization step. A coiled-coil region spans residues 105–130 (HILDGNAADLQAECDAFENKIKEAGG). D141 functions as the For ring-opening step in the catalytic mechanism. H143 (proton acceptor; for ring-opening step) is an active-site residue. Catalysis depends on E148, which acts as the For ring-opening step. Position 161 is a phosphothreonine (T161).

It belongs to the glucosamine/galactosamine-6-phosphate isomerase family. In terms of assembly, homohexamer. Ubiquitous, with highest expression detected in testis, ovary, placenta, and heart.

It localises to the cytoplasm. It catalyses the reaction alpha-D-glucosamine 6-phosphate + H2O = beta-D-fructose 6-phosphate + NH4(+). It participates in nucleotide-sugar biosynthesis; UDP-N-acetyl-alpha-D-glucosamine biosynthesis; alpha-D-glucosamine 6-phosphate from D-fructose 6-phosphate: step 1/1. Allosterically activated by N-acetylglucosamine-6-phosphate (GlcNAc6P). Its function is as follows. Catalyzes the reversible conversion of alpha-D-glucosamine 6-phosphate (GlcN-6P) into beta-D-fructose 6-phosphate (Fru-6P) and ammonium ion, a regulatory reaction step in de novo uridine diphosphate-N-acetyl-alpha-D-glucosamine (UDP-GlcNAc) biosynthesis via hexosamine pathway. Deamination is coupled to aldo-keto isomerization mediating the metabolic flux from UDP-GlcNAc toward Fru-6P. At high ammonium level can drive amination and isomerization of Fru-6P toward hexosamines and UDP-GlcNAc synthesis. Has a role in fine tuning the metabolic fluctuations of cytosolic UDP-GlcNAc and their effects on hyaluronan synthesis that occur during tissue remodeling. This chain is Glucosamine-6-phosphate deaminase 2, found in Homo sapiens (Human).